Here is a 213-residue protein sequence, read N- to C-terminus: Peptide methionine sulfoxide reductase MsrA (213 aa).

The active site involves Cys-52.

It belongs to the MsrA Met sulfoxide reductase family.

It catalyses the reaction L-methionyl-[protein] + [thioredoxin]-disulfide + H2O = L-methionyl-(S)-S-oxide-[protein] + [thioredoxin]-dithiol. The enzyme catalyses [thioredoxin]-disulfide + L-methionine + H2O = L-methionine (S)-S-oxide + [thioredoxin]-dithiol. Has an important function as a repair enzyme for proteins that have been inactivated by oxidation. Catalyzes the reversible oxidation-reduction of methionine sulfoxide in proteins to methionine. The sequence is that of Peptide methionine sulfoxide reductase MsrA from Enterobacter sp. (strain 638).